The following is a 219-amino-acid chain: Clathrin light chain (219 aa).

The interval 32-136 (AEITGGSASA…KKEELRQQSK (105 aa)) is disordered. Residues 96-158 (PPPSREEPEK…SISKTKLASR (63 aa)) are involved in binding clathrin heavy chain. Residues 99 to 136 (SREEPEKIRKWREEQKQRLEEKDIEEERKKEELRQQSK) are compositionally biased toward basic and acidic residues.

Belongs to the clathrin light chain family. Clathrin coats are formed from molecules containing 3 heavy chains and 3 light chains.

The protein resides in the cytoplasmic vesicle membrane. It localises to the membrane. It is found in the coated pit. Functionally, clathrin is the major protein of the polyhedral coat of coated pits and vesicles. This Drosophila melanogaster (Fruit fly) protein is Clathrin light chain (Clc).